The primary structure comprises 670 residues: Acetyl-coenzyme A synthetase (670 aa).

Residues 211–214 (RGGK) and Thr-329 each bind CoA. Residues 404-406 (GEP), 428-433 (DTYWQT), Asp-519, and Arg-534 contribute to the ATP site. Ser-542 is a binding site for CoA. Arg-545 lines the ATP pocket. Arg-603 provides a ligand contact to CoA.

Belongs to the ATP-dependent AMP-binding enzyme family.

It catalyses the reaction acetate + ATP + CoA = acetyl-CoA + AMP + diphosphate. This is Acetyl-coenzyme A synthetase (facA) from Emericella nidulans (strain FGSC A4 / ATCC 38163 / CBS 112.46 / NRRL 194 / M139) (Aspergillus nidulans).